The chain runs to 98 residues: MKGQNVTLQDIAIELEDTISPINLHCEEEIETEEVDTPNPFAITATCYACEQVLRLAVVTSTEGIHQLQQLLFDNLFLLCAACSKQVFCNRRPERNGP.

Residues 1 to 37 (MKGQNVTLQDIAIELEDTISPINLHCEEEIETEEVDT) are E7 terminal domain. Positions 24 to 28 (LHCEE) match the LXCXE motif; interaction with host RB1 and TMEM173/STING motif. A zinc finger spans residues 47 to 83 (CYACEQVLRLAVVTSTEGIHQLQQLLFDNLFLLCAAC). A Nuclear export signal motif is present at residues 65-73 (IHQLQQLLF).

It belongs to the papillomaviridae E7 protein family. Homodimer. Homooligomer. Interacts with host RB1; this interaction induces dissociation of RB1-E2F1 complex thereby disrupting RB1 activity. Interacts with host EP300; this interaction represses EP300 transcriptional activity. Interacts with protein E2; this interaction inhibits E7 oncogenic activity. Interacts with host TMEM173/STING; this interaction impairs the ability of TMEM173/STING to sense cytosolic DNA and promote the production of type I interferon (IFN-alpha and IFN-beta). In terms of processing, highly phosphorylated.

The protein localises to the host cytoplasm. It localises to the host nucleus. Functionally, plays a role in viral genome replication by driving entry of quiescent cells into the cell cycle. Stimulation of progression from G1 to S phase allows the virus to efficiently use the cellular DNA replicating machinery to achieve viral genome replication. E7 protein has both transforming and trans-activating activities. Induces the disassembly of the E2F1 transcription factor from RB1, with subsequent transcriptional activation of E2F1-regulated S-phase genes. Interferes with host histone deacetylation mediated by HDAC1 and HDAC2, leading to transcription activation. Also plays a role in the inhibition of both antiviral and antiproliferative functions of host interferon alpha. Interaction with host TMEM173/STING impairs the ability of TMEM173/STING to sense cytosolic DNA and promote the production of type I interferon (IFN-alpha and IFN-beta). The chain is Protein E7 from Bos taurus papillomavirus 4 (Bovine papillomavirus 4).